Consider the following 287-residue polypeptide: MNSKKHLGHTARKRFGQNFLHDTSVIQGIVAAIYPQPNQFLVEIGPGLGALTEPVGELVDHLTVVELDRDLAERLRHHPFLHQKLTVIETDAMQFDFGALYTKENLAEKGQKLRVFGNLPYNISTPLMFHLFKYHDVIQDMHFMLQKEVVKRLCAAPNSKAYGRLTIMAQYFCQVMPVLEVPPSAFKPAPKVDSAVVRLIPHKELPHPVKDLYWLNRVCSQAFNQRRKTLRNALSTLFSPENLTALGIDLNARAENLAIADYARLANWLADNPPADVNKDEILDSEE.

S-adenosyl-L-methionine is bound by residues asparagine 18, leucine 20, glycine 45, glutamate 66, aspartate 91, and asparagine 118.

It belongs to the class I-like SAM-binding methyltransferase superfamily. rRNA adenine N(6)-methyltransferase family. RsmA subfamily.

It is found in the cytoplasm. It catalyses the reaction adenosine(1518)/adenosine(1519) in 16S rRNA + 4 S-adenosyl-L-methionine = N(6)-dimethyladenosine(1518)/N(6)-dimethyladenosine(1519) in 16S rRNA + 4 S-adenosyl-L-homocysteine + 4 H(+). Functionally, specifically dimethylates two adjacent adenosines (A1518 and A1519) in the loop of a conserved hairpin near the 3'-end of 16S rRNA in the 30S particle. May play a critical role in biogenesis of 30S subunits. This chain is Ribosomal RNA small subunit methyltransferase A, found in Haemophilus influenzae (strain ATCC 51907 / DSM 11121 / KW20 / Rd).